The sequence spans 44 residues: Large ribosomal subunit protein bL34 (44 aa).

It belongs to the bacterial ribosomal protein bL34 family.

The protein is Large ribosomal subunit protein bL34 of Wolbachia sp. subsp. Brugia malayi (strain TRS).